We begin with the raw amino-acid sequence, 445 residues long: ATP-dependent protease ATPase subunit HslU (445 aa).

ATP-binding positions include I17, 59–64 (GVGKTE), D254, E319, and R391.

Belongs to the ClpX chaperone family. HslU subfamily. In terms of assembly, a double ring-shaped homohexamer of HslV is capped on each side by a ring-shaped HslU homohexamer. The assembly of the HslU/HslV complex is dependent on binding of ATP.

It is found in the cytoplasm. In terms of biological role, ATPase subunit of a proteasome-like degradation complex; this subunit has chaperone activity. The binding of ATP and its subsequent hydrolysis by HslU are essential for unfolding of protein substrates subsequently hydrolyzed by HslV. HslU recognizes the N-terminal part of its protein substrates and unfolds these before they are guided to HslV for hydrolysis. This is ATP-dependent protease ATPase subunit HslU from Pseudomonas savastanoi pv. phaseolicola (strain 1448A / Race 6) (Pseudomonas syringae pv. phaseolicola (strain 1448A / Race 6)).